A 132-amino-acid polypeptide reads, in one-letter code: Small ribosomal subunit protein uS8 (132 aa).

It belongs to the universal ribosomal protein uS8 family. In terms of assembly, part of the 30S ribosomal subunit. Contacts proteins S5 and S12.

In terms of biological role, one of the primary rRNA binding proteins, it binds directly to 16S rRNA central domain where it helps coordinate assembly of the platform of the 30S subunit. The chain is Small ribosomal subunit protein uS8 from Brucella melitensis biotype 1 (strain ATCC 23456 / CCUG 17765 / NCTC 10094 / 16M).